We begin with the raw amino-acid sequence, 349 residues long: Anthranilate phosphoribosyltransferase (349 aa).

5-phospho-alpha-D-ribose 1-diphosphate contacts are provided by residues glycine 82, 85 to 86, 92 to 95, 110 to 118, and serine 122; these read GD, NVSS, and KHGNRAVSG. Glycine 82 serves as a coordination point for anthranilate. Serine 94 lines the Mg(2+) pocket. Residue asparagine 113 participates in anthranilate binding. Position 168 (arginine 168) interacts with anthranilate. Positions 227 and 228 each coordinate Mg(2+).

It belongs to the anthranilate phosphoribosyltransferase family. In terms of assembly, homodimer. It depends on Mg(2+) as a cofactor.

The catalysed reaction is N-(5-phospho-beta-D-ribosyl)anthranilate + diphosphate = 5-phospho-alpha-D-ribose 1-diphosphate + anthranilate. The protein operates within amino-acid biosynthesis; L-tryptophan biosynthesis; L-tryptophan from chorismate: step 2/5. Its function is as follows. Catalyzes the transfer of the phosphoribosyl group of 5-phosphorylribose-1-pyrophosphate (PRPP) to anthranilate to yield N-(5'-phosphoribosyl)-anthranilate (PRA). This chain is Anthranilate phosphoribosyltransferase, found in Pseudomonas aeruginosa (strain LESB58).